The sequence spans 429 residues: Glutamate-1-semialdehyde 2,1-aminomutase (429 aa).

Residue Lys-267 is modified to N6-(pyridoxal phosphate)lysine.

This sequence belongs to the class-III pyridoxal-phosphate-dependent aminotransferase family. HemL subfamily. Homodimer. Pyridoxal 5'-phosphate is required as a cofactor.

It localises to the cytoplasm. It carries out the reaction (S)-4-amino-5-oxopentanoate = 5-aminolevulinate. Its pathway is porphyrin-containing compound metabolism; protoporphyrin-IX biosynthesis; 5-aminolevulinate from L-glutamyl-tRNA(Glu): step 2/2. This chain is Glutamate-1-semialdehyde 2,1-aminomutase, found in Anaeromyxobacter sp. (strain Fw109-5).